The following is a 157-amino-acid chain: MSRRHAAEKKIIPADPIYGSVTLERFINKVMMHGKKSIARKIVYNALERFAKKVGAENVLEAFEEALENAKPLLEVRSRRVGGATYQVPVEVAAGRRDCLAMQWIIKFARAKPGKSMEVGLATELVDCFNKQGATIKKREDTHRMAEANKAFAHYKW.

The protein belongs to the universal ribosomal protein uS7 family. Part of the 30S ribosomal subunit. Contacts proteins S9 and S11.

Functionally, one of the primary rRNA binding proteins, it binds directly to 16S rRNA where it nucleates assembly of the head domain of the 30S subunit. Is located at the subunit interface close to the decoding center, probably blocks exit of the E-site tRNA. This chain is Small ribosomal subunit protein uS7, found in Chlamydia abortus (strain DSM 27085 / S26/3) (Chlamydophila abortus).